A 312-amino-acid chain; its full sequence is Methionyl-tRNA formyltransferase (312 aa).

112 to 115 (SLLP) lines the (6S)-5,6,7,8-tetrahydrofolate pocket.

It belongs to the Fmt family.

It carries out the reaction L-methionyl-tRNA(fMet) + (6R)-10-formyltetrahydrofolate = N-formyl-L-methionyl-tRNA(fMet) + (6S)-5,6,7,8-tetrahydrofolate + H(+). In terms of biological role, attaches a formyl group to the free amino group of methionyl-tRNA(fMet). The formyl group appears to play a dual role in the initiator identity of N-formylmethionyl-tRNA by promoting its recognition by IF2 and preventing the misappropriation of this tRNA by the elongation apparatus. The sequence is that of Methionyl-tRNA formyltransferase from Magnetococcus marinus (strain ATCC BAA-1437 / JCM 17883 / MC-1).